The following is a 351-amino-acid chain: S-adenosylmethionine:tRNA ribosyltransferase-isomerase (351 aa).

This sequence belongs to the QueA family. Monomer.

The protein localises to the cytoplasm. The catalysed reaction is 7-aminomethyl-7-carbaguanosine(34) in tRNA + S-adenosyl-L-methionine = epoxyqueuosine(34) in tRNA + adenine + L-methionine + 2 H(+). Its pathway is tRNA modification; tRNA-queuosine biosynthesis. Functionally, transfers and isomerizes the ribose moiety from AdoMet to the 7-aminomethyl group of 7-deazaguanine (preQ1-tRNA) to give epoxyqueuosine (oQ-tRNA). The polypeptide is S-adenosylmethionine:tRNA ribosyltransferase-isomerase (Roseobacter denitrificans (strain ATCC 33942 / OCh 114) (Erythrobacter sp. (strain OCh 114))).